An 861-amino-acid polypeptide reads, in one-letter code: MIGQITSGLFGGHDDSKKVKGTVVMMNKNVLDFTDLASSLTGKIFDVLGQKVSFQLISSVQGDPTNGLQGKHSNPAYLENSLFTLTPLTAGSETAFGVTFDWNEEFGVPGAFIIKNMHITEFFLKSLTLEDVPNHGKVHFVCNSWVYPSLNYKSDRIFFANQPYLPSDTPELLRKYRENELLTLRGDGTGKREAWDRIYDYDIYNDLGNPDQGKENVRTTLGGSAEYPYPRRGRTGRPPTRTDPKSESRIPLILSTDIYVPRDERFGHLKMSDFLTYALKSIVQFILPELHALFDGTPNEFDSFEDVLRLYEGGIKLPQGPLFKALTAAIPLEMIRELLRTDGEGILRFPTPLVIKDSKTAWRTDEEFAREMLAGTNPVIISRLQEFPPKSKLDPEAYGNQNSTITAEHIEDKLDGLTVDEAMNNNKLFILNHHDLLIPYLRRINTTITKTYASRTLLFLQDNGSLKPLAIELSLPHPDGDQFGVTSKVYTPSDQGVESSIWQLAKAYVAVNDSGVHQLISHWLNTHAVIEPFVIATNRQLSVLHPIHKLLYPHFRDTMNINALARQILINAAGVFESTVFQSKFALEMSAVVYKDWVFPDQALPADLVKRGVAVEDSSSPHGVRLLIEDYPYAVDGLEIWSAIKSWVTDYCSFYYGSDEEILKDNELQAWWKELREVGHGDKKNEPWWPEMETPQELIDSCTTIIWIASALHAAVNFGQYPYAGYLPNRATVSRRFMPEPGTPEYEELKKNPDKAFLKTITAQLQTLLGVSLVEILSRHTTDEIYLGQRESPEWTKDKEPLAAFDRFGKKLTDIEKQIIQRNGDNILTNRSGPVNAPYTLLFPTSEGGLTGKGIPNSVSI.

A PLAT domain is found at 33-160 (FTDLASSLTG…NYKSDRIFFA (128 aa)). Positions 163 to 861 (PYLPSDTPEL…GKGIPNSVSI (699 aa)) constitute a Lipoxygenase domain. A disordered region spans residues 220–247 (TLGGSAEYPYPRRGRTGRPPTRTDPKSE). Positions 522, 527, 713, 717, and 861 each coordinate Fe cation.

Belongs to the lipoxygenase family. In terms of assembly, monomer. It depends on Fe cation as a cofactor. Expressed in tubers and roots. Not detected in leaves, flowers, stems, shoot tips, or axillary buds.

The protein localises to the cytoplasm. The catalysed reaction is (9Z,12Z)-octadecadienoate + O2 = (9S)-hydroperoxy-(10E,12Z)-octadecadienoate. It participates in lipid metabolism; oxylipin biosynthesis. Its function is as follows. Plant lipoxygenases may be involved in a number of diverse aspects of plant physiology including growth and development, pest resistance, and senescence or responses to wounding. Catalyzes the hydroperoxidation of lipids containing a cis,cis-1,4-pentadiene structure. In Solanum tuberosum (Potato), this protein is Probable linoleate 9S-lipoxygenase 3 (LOX1.3).